We begin with the raw amino-acid sequence, 162 residues long: Phosphopantetheine adenylyltransferase (162 aa).

A substrate-binding site is contributed by Ser-9. ATP is bound by residues 9 to 10 (SF) and His-17. Substrate contacts are provided by Lys-41, Leu-73, and Lys-87. Residues 88–90 (GLR), Glu-98, and 123–129 (YAHLSSS) each bind ATP.

It belongs to the bacterial CoaD family. As to quaternary structure, homohexamer. The cofactor is Mg(2+).

Its subcellular location is the cytoplasm. The catalysed reaction is (R)-4'-phosphopantetheine + ATP + H(+) = 3'-dephospho-CoA + diphosphate. Its pathway is cofactor biosynthesis; coenzyme A biosynthesis; CoA from (R)-pantothenate: step 4/5. Reversibly transfers an adenylyl group from ATP to 4'-phosphopantetheine, yielding dephospho-CoA (dPCoA) and pyrophosphate. The chain is Phosphopantetheine adenylyltransferase from Symbiobacterium thermophilum (strain DSM 24528 / JCM 14929 / IAM 14863 / T).